We begin with the raw amino-acid sequence, 305 residues long: MAGRNQNRTVSLPGIQASGHVLAFGNCTDNDMLEEDAEVYELRSRGKEKVRRSASRDRLDDIVILTKDIQEGDTLNAVALQYCCTVADIKRVNNLISDQDFFALRSIKIPVKRFSSLTETLHPLKGRHILHPPPVPYFQEQDIVPADGSLSSSESAGSFLKEVDRDIEQIVKCTDTKKENLNEVVSALTAQQVRFEPDNKSIHRKDPYYGADWGIGWWTAVVIMLIVGIITPVFYLLYYEILAKVDVSHHSTVGSSHLHPGLTPPTQHREMENEIGPTKGIPVGQQDDHKLYRQDPQAHDAQHKT.

Residues 1-216 (MAGRNQNRTV…PYYGADWGIG (216 aa)) are Extracellular-facing. 2 N-linked (GlcNAc...) asparagine glycosylation sites follow: N7 and N26. Position 55 is a phosphoserine (S55). Residues 65 to 109 (LTKDIQEGDTLNAVALQYCCTVADIKRVNNLISDQDFFALRSIKI) form the LysM domain. N-linked (GlcNAc...) asparagine glycosylation occurs at N199. Residues 217–237 (WWTAVVIMLIVGIITPVFYLL) traverse the membrane as a helical segment. Residues 238 to 305 (YYEILAKVDV…PQAHDAQHKT (68 aa)) lie on the Cytoplasmic side of the membrane. The disordered stretch occupies residues 253–305 (VGSSHLHPGLTPPTQHREMENEIGPTKGIPVGQQDDHKLYRQDPQAHDAQHKT). Positions 286 to 305 (QDDHKLYRQDPQAHDAQHKT) are enriched in basic and acidic residues.

It is found in the cell membrane. Its subcellular location is the golgi apparatus. Functionally, essential for Golgi structural integrity. This chain is LysM and putative peptidoglycan-binding domain-containing protein 3 (Lysmd3), found in Mus musculus (Mouse).